Reading from the N-terminus, the 92-residue chain is Progonadoliberin-1 (92 aa).

The N-terminal stretch at 1–23 (METIPKLMAAVVLLTVCLEGCSS) is a signal peptide. Position 24 is a pyrrolidone carboxylic acid (glutamine 24). Residue glycine 33 is modified to Glycine amide.

It belongs to the GnRH family. Post-translationally, the precursor is cleaved by ACE, which removes the Gly-Lys-Arg peptide at the C-terminus, leading to mature hormone. The mature form of Gonadoliberin-1 is also cleaved and degraded by ACE. As to expression, central nervous system.

Its subcellular location is the secreted. Its function is as follows. Stimulates the secretion of gonadotropins; it stimulates the secretion of both luteinizing and follicle-stimulating hormones. In Rattus norvegicus (Rat), this protein is Progonadoliberin-1 (Gnrh1).